The primary structure comprises 299 residues: Regucalcin (299 aa).

Glu-18 is a binding site for a divalent metal cation. Substrate is bound by residues Arg-101, Asn-103, and Glu-121. Residues Asn-154 and Asp-204 each coordinate a divalent metal cation. Catalysis depends on Asp-204, which acts as the Proton donor/acceptor.

This sequence belongs to the SMP-30/CGR1 family. The cofactor is Zn(2+). Mn(2+) is required as a cofactor. Requires Ca(2+) as cofactor. It depends on Mg(2+) as a cofactor.

Its subcellular location is the cytoplasm. The enzyme catalyses D-glucono-1,5-lactone + H2O = D-gluconate + H(+). Its pathway is cofactor biosynthesis; L-ascorbate biosynthesis via UDP-alpha-D-glucuronate pathway; L-ascorbate from UDP-alpha-D-glucuronate: step 3/4. In terms of biological role, gluconolactonase with low activity towards other sugar lactones, including gulonolactone and galactonolactone. Catalyzes a key step in ascorbic acid (vitamin C) biosynthesis. Can also hydrolyze diisopropyl phosphorofluoridate and phenylacetate (in vitro). Calcium-binding protein. Modulates Ca(2+) signaling, and Ca(2+)-dependent cellular processes and enzyme activities. The polypeptide is Regucalcin (Gallus gallus (Chicken)).